We begin with the raw amino-acid sequence, 712 residues long: Saccharolysin (712 aa).

The residue at position 73 (S73) is a Phosphoserine. H501 is a Zn(2+) binding site. E502 is a catalytic residue. Residues H505 and H508 each coordinate Zn(2+).

This sequence belongs to the peptidase M3 family. The cofactor is Zn(2+).

It is found in the cytoplasm. It carries out the reaction Cleavage of Pro-|-Phe and Ala-|-Ala bonds.. In terms of biological role, could be involved in late stage of protein degradation. In Saccharomyces cerevisiae (strain ATCC 204508 / S288c) (Baker's yeast), this protein is Saccharolysin (PRD1).